Reading from the N-terminus, the 377-residue chain is Chaperone protein DnaJ (377 aa).

A J domain is found at 8–73 (CYYETLEVER…DKRAAYDRFG (66 aa)). Residues 135-213 (GKTAQIEIPV…CSGQGRVTRE (79 aa)) form a CR-type zinc finger. Residues C148, C151, C165, C168, C187, C190, C201, and C204 each contribute to the Zn(2+) site. CXXCXGXG motif repeat units lie at residues 148–155 (CEACSGIG), 165–172 (CSTCGGAG), 187–194 (CPGCQGRG), and 201–208 (CPSCSGQG).

It belongs to the DnaJ family. Homodimer. Requires Zn(2+) as cofactor.

It is found in the cytoplasm. In terms of biological role, participates actively in the response to hyperosmotic and heat shock by preventing the aggregation of stress-denatured proteins and by disaggregating proteins, also in an autonomous, DnaK-independent fashion. Unfolded proteins bind initially to DnaJ; upon interaction with the DnaJ-bound protein, DnaK hydrolyzes its bound ATP, resulting in the formation of a stable complex. GrpE releases ADP from DnaK; ATP binding to DnaK triggers the release of the substrate protein, thus completing the reaction cycle. Several rounds of ATP-dependent interactions between DnaJ, DnaK and GrpE are required for fully efficient folding. Also involved, together with DnaK and GrpE, in the DNA replication of plasmids through activation of initiation proteins. This Bradyrhizobium diazoefficiens (strain JCM 10833 / BCRC 13528 / IAM 13628 / NBRC 14792 / USDA 110) protein is Chaperone protein DnaJ.